A 176-amino-acid chain; its full sequence is Transcription factor E (176 aa).

The HTH TFE/IIEalpha-type domain maps to 8-90; it reads NDPVIQKYLH…LWTFHYENIP (83 aa).

It belongs to the TFE family. As to quaternary structure, monomer. Interaction with RNA polymerase subunits RpoF and RpoE is necessary for Tfe stimulatory transcription activity. Able to interact with Tbp and RNA polymerase in the absence of DNA promoter. Interacts both with the preinitiation and elongation complexes.

Transcription factor that plays a role in the activation of archaeal genes transcribed by RNA polymerase. Facilitates transcription initiation by enhancing TATA-box recognition by TATA-box-binding protein (Tbp), and transcription factor B (Tfb) and RNA polymerase recruitment. Not absolutely required for transcription in vitro, but particularly important in cases where Tbp or Tfb function is not optimal. It dynamically alters the nucleic acid-binding properties of RNA polymerases by stabilizing the initiation complex and destabilizing elongation complexes. Seems to translocate with the RNA polymerase following initiation and acts by binding to the non template strand of the transcription bubble in elongation complexes. The protein is Transcription factor E of Haloquadratum walsbyi (strain DSM 16790 / HBSQ001).